A 307-amino-acid chain; its full sequence is 4-hydroxy-3-methylbut-2-enyl diphosphate reductase (307 aa).

C13 provides a ligand contact to [4Fe-4S] cluster. (2E)-4-hydroxy-3-methylbut-2-enyl diphosphate-binding residues include H42 and H75. Dimethylallyl diphosphate is bound by residues H42 and H75. 2 residues coordinate isopentenyl diphosphate: H42 and H75. C97 contacts [4Fe-4S] cluster. (2E)-4-hydroxy-3-methylbut-2-enyl diphosphate is bound at residue H125. H125 lines the dimethylallyl diphosphate pocket. H125 is a binding site for isopentenyl diphosphate. The active-site Proton donor is the E127. T165 contacts (2E)-4-hydroxy-3-methylbut-2-enyl diphosphate. C195 lines the [4Fe-4S] cluster pocket. (2E)-4-hydroxy-3-methylbut-2-enyl diphosphate-binding residues include S223, S224, N225, and S267. Dimethylallyl diphosphate contacts are provided by S223, S224, N225, and S267. Positions 223, 224, 225, and 267 each coordinate isopentenyl diphosphate.

Belongs to the IspH family. It depends on [4Fe-4S] cluster as a cofactor.

It catalyses the reaction isopentenyl diphosphate + 2 oxidized [2Fe-2S]-[ferredoxin] + H2O = (2E)-4-hydroxy-3-methylbut-2-enyl diphosphate + 2 reduced [2Fe-2S]-[ferredoxin] + 2 H(+). It carries out the reaction dimethylallyl diphosphate + 2 oxidized [2Fe-2S]-[ferredoxin] + H2O = (2E)-4-hydroxy-3-methylbut-2-enyl diphosphate + 2 reduced [2Fe-2S]-[ferredoxin] + 2 H(+). It functions in the pathway isoprenoid biosynthesis; dimethylallyl diphosphate biosynthesis; dimethylallyl diphosphate from (2E)-4-hydroxy-3-methylbutenyl diphosphate: step 1/1. Its pathway is isoprenoid biosynthesis; isopentenyl diphosphate biosynthesis via DXP pathway; isopentenyl diphosphate from 1-deoxy-D-xylulose 5-phosphate: step 6/6. In terms of biological role, catalyzes the conversion of 1-hydroxy-2-methyl-2-(E)-butenyl 4-diphosphate (HMBPP) into a mixture of isopentenyl diphosphate (IPP) and dimethylallyl diphosphate (DMAPP). Acts in the terminal step of the DOXP/MEP pathway for isoprenoid precursor biosynthesis. The polypeptide is 4-hydroxy-3-methylbut-2-enyl diphosphate reductase (Chlamydia trachomatis serovar D (strain ATCC VR-885 / DSM 19411 / UW-3/Cx)).